The chain runs to 204 residues: Holliday junction branch migration complex subunit RuvA (204 aa).

The segment at 1–64 (MIGKLKGTID…EDQLKLFGFM (64 aa)) is domain I. The interval 65–143 (TALEREWFNL…AFAGEAINIA (79 aa)) is domain II. A flexible linker region spans residues 144 to 151 (LKQELGEG). Residues 152–204 (VAAAPVADAVSALTNLGYSRDQAANAVAAAMKTAGDDADSAKLIRLGLKELAR) are domain III.

This sequence belongs to the RuvA family. As to quaternary structure, homotetramer. Forms an RuvA(8)-RuvB(12)-Holliday junction (HJ) complex. HJ DNA is sandwiched between 2 RuvA tetramers; dsDNA enters through RuvA and exits via RuvB. An RuvB hexamer assembles on each DNA strand where it exits the tetramer. Each RuvB hexamer is contacted by two RuvA subunits (via domain III) on 2 adjacent RuvB subunits; this complex drives branch migration. In the full resolvosome a probable DNA-RuvA(4)-RuvB(12)-RuvC(2) complex forms which resolves the HJ.

The protein resides in the cytoplasm. In terms of biological role, the RuvA-RuvB-RuvC complex processes Holliday junction (HJ) DNA during genetic recombination and DNA repair, while the RuvA-RuvB complex plays an important role in the rescue of blocked DNA replication forks via replication fork reversal (RFR). RuvA specifically binds to HJ cruciform DNA, conferring on it an open structure. The RuvB hexamer acts as an ATP-dependent pump, pulling dsDNA into and through the RuvAB complex. HJ branch migration allows RuvC to scan DNA until it finds its consensus sequence, where it cleaves and resolves the cruciform DNA. The protein is Holliday junction branch migration complex subunit RuvA of Rhizobium leguminosarum bv. trifolii (strain WSM2304).